The sequence spans 373 residues: ATP phosphoribosyltransferase regulatory subunit (373 aa).

It belongs to the class-II aminoacyl-tRNA synthetase family. HisZ subfamily. In terms of assembly, heteromultimer composed of HisG and HisZ subunits.

The protein localises to the cytoplasm. It participates in amino-acid biosynthesis; L-histidine biosynthesis; L-histidine from 5-phospho-alpha-D-ribose 1-diphosphate: step 1/9. Its function is as follows. Required for the first step of histidine biosynthesis. May allow the feedback regulation of ATP phosphoribosyltransferase activity by histidine. The sequence is that of ATP phosphoribosyltransferase regulatory subunit from Rhizobium etli (strain CIAT 652).